The chain runs to 181 residues: 6,7-dimethyl-8-ribityllumazine synthase (181 aa).

5-amino-6-(D-ribitylamino)uracil-binding positions include Phe24, 62–64, and 86–88; these read SFE and AII. 91 to 92 contributes to the (2S)-2-hydroxy-3-oxobutyl phosphate binding site; the sequence is QT. Residue His94 is the Proton donor of the active site. Position 119 (Phe119) interacts with 5-amino-6-(D-ribitylamino)uracil. A (2S)-2-hydroxy-3-oxobutyl phosphate-binding site is contributed by Arg133.

This sequence belongs to the DMRL synthase family.

The catalysed reaction is (2S)-2-hydroxy-3-oxobutyl phosphate + 5-amino-6-(D-ribitylamino)uracil = 6,7-dimethyl-8-(1-D-ribityl)lumazine + phosphate + 2 H2O + H(+). The protein operates within cofactor biosynthesis; riboflavin biosynthesis; riboflavin from 2-hydroxy-3-oxobutyl phosphate and 5-amino-6-(D-ribitylamino)uracil: step 1/2. Functionally, catalyzes the formation of 6,7-dimethyl-8-ribityllumazine by condensation of 5-amino-6-(D-ribitylamino)uracil with 3,4-dihydroxy-2-butanone 4-phosphate. This is the penultimate step in the biosynthesis of riboflavin. This is 6,7-dimethyl-8-ribityllumazine synthase from Microcystis aeruginosa (strain NIES-843 / IAM M-2473).